A 95-amino-acid polypeptide reads, in one-letter code: Protein TusB (95 aa).

Belongs to the DsrH/TusB family. As to quaternary structure, heterohexamer, formed by a dimer of trimers. The hexameric TusBCD complex contains 2 copies each of TusB, TusC and TusD. The TusBCD complex interacts with TusE.

The protein resides in the cytoplasm. Functionally, part of a sulfur-relay system required for 2-thiolation of 5-methylaminomethyl-2-thiouridine (mnm(5)s(2)U) at tRNA wobble positions. The chain is Protein TusB from Escherichia coli (strain K12 / MC4100 / BW2952).